The sequence spans 331 residues: Ketol-acid reductoisomerase (NADP(+)) (331 aa).

The KARI N-terminal Rossmann domain occupies 2-182; that stretch reads ARMYYDSDAN…GGTRAGILET (181 aa). Residues 25–28, serine 51, serine 53, and 83–86 each bind NADP(+); these read YGSQ and DEVQ. Histidine 108 is a catalytic residue. Residue glycine 134 coordinates NADP(+). Positions 183–328 constitute a KARI C-terminal knotted domain; the sequence is TFREETETDL…KDLRAMFSWL (146 aa). Residues aspartate 191, glutamate 195, glutamate 227, and glutamate 231 each contribute to the Mg(2+) site. Serine 252 provides a ligand contact to substrate.

This sequence belongs to the ketol-acid reductoisomerase family. Requires Mg(2+) as cofactor.

It catalyses the reaction (2R)-2,3-dihydroxy-3-methylbutanoate + NADP(+) = (2S)-2-acetolactate + NADPH + H(+). It carries out the reaction (2R,3R)-2,3-dihydroxy-3-methylpentanoate + NADP(+) = (S)-2-ethyl-2-hydroxy-3-oxobutanoate + NADPH + H(+). The protein operates within amino-acid biosynthesis; L-isoleucine biosynthesis; L-isoleucine from 2-oxobutanoate: step 2/4. It functions in the pathway amino-acid biosynthesis; L-valine biosynthesis; L-valine from pyruvate: step 2/4. Functionally, involved in the biosynthesis of branched-chain amino acids (BCAA). Catalyzes an alkyl-migration followed by a ketol-acid reduction of (S)-2-acetolactate (S2AL) to yield (R)-2,3-dihydroxy-isovalerate. In the isomerase reaction, S2AL is rearranged via a Mg-dependent methyl migration to produce 3-hydroxy-3-methyl-2-ketobutyrate (HMKB). In the reductase reaction, this 2-ketoacid undergoes a metal-dependent reduction by NADPH to yield (R)-2,3-dihydroxy-isovalerate. The polypeptide is Ketol-acid reductoisomerase (NADP(+)) (Trichodesmium erythraeum (strain IMS101)).